The following is a 68-amino-acid chain: Conotoxin Lt5.2 (68 aa).

The first 19 residues, 1 to 19 (MLCLPVFIILLLLASPAAP), serve as a signal peptide directing secretion. Positions 20-54 (KSLETRIQNDLIRAGLTDADLKTEKGFLSGLLNVA) are excised as a propeptide.

It belongs to the conotoxin T superfamily. Post-translationally, contains 2 disulfide bonds that can be either 'C1-C3, C2-C4' or 'C1-C4, C2-C3', since these disulfide connectivities have been observed for conotoxins with cysteine framework V (for examples, see AC P0DQQ7 and AC P81755). In terms of tissue distribution, expressed by the venom duct.

Its subcellular location is the secreted. The protein is Conotoxin Lt5.2 of Conus litteratus (Lettered cone).